Reading from the N-terminus, the 345-residue chain is Anthranilate phosphoribosyltransferase (345 aa).

Residues Gly-84, 87-88 (GD), Thr-92, 94-97 (NIST), 112-120 (KHGNRSVSS), and Ser-124 contribute to the 5-phospho-alpha-D-ribose 1-diphosphate site. Gly-84 contacts anthranilate. Ser-96 is a binding site for Mg(2+). Asn-115 provides a ligand contact to anthranilate. Arg-170 is a binding site for anthranilate. Mg(2+) contacts are provided by Asp-229 and Glu-230.

The protein belongs to the anthranilate phosphoribosyltransferase family. As to quaternary structure, homodimer. The cofactor is Mg(2+).

It carries out the reaction N-(5-phospho-beta-D-ribosyl)anthranilate + diphosphate = 5-phospho-alpha-D-ribose 1-diphosphate + anthranilate. The protein operates within amino-acid biosynthesis; L-tryptophan biosynthesis; L-tryptophan from chorismate: step 2/5. Its function is as follows. Catalyzes the transfer of the phosphoribosyl group of 5-phosphorylribose-1-pyrophosphate (PRPP) to anthranilate to yield N-(5'-phosphoribosyl)-anthranilate (PRA). This Xanthomonas euvesicatoria pv. vesicatoria (strain 85-10) (Xanthomonas campestris pv. vesicatoria) protein is Anthranilate phosphoribosyltransferase.